Reading from the N-terminus, the 351-residue chain is Dihydroorotate dehydrogenase (quinone) (351 aa).

Residues 65–69 (AGLDK) and Thr89 each bind FMN. Residue Lys69 coordinates substrate. 114–118 (NRLGF) is a binding site for substrate. Positions 150 and 183 each coordinate FMN. Asn183 provides a ligand contact to substrate. The active-site Nucleophile is the Ser186. Substrate is bound at residue Asn188. Residues Lys228 and Thr256 each contribute to the FMN site. 257 to 258 (NT) is a substrate binding site. FMN is bound by residues Gly279, Gly308, and 329-330 (YT).

This sequence belongs to the dihydroorotate dehydrogenase family. Type 2 subfamily. Monomer. FMN serves as cofactor.

Its subcellular location is the cell membrane. The catalysed reaction is (S)-dihydroorotate + a quinone = orotate + a quinol. It functions in the pathway pyrimidine metabolism; UMP biosynthesis via de novo pathway; orotate from (S)-dihydroorotate (quinone route): step 1/1. Functionally, catalyzes the conversion of dihydroorotate to orotate with quinone as electron acceptor. This chain is Dihydroorotate dehydrogenase (quinone), found in Acidovorax sp. (strain JS42).